Here is a 337-residue protein sequence, read N- to C-terminus: F420-dependent glucose-6-phosphate dehydrogenase 2 (337 aa).

D40 is a coenzyme F420-(gamma-Glu)n binding site. The Proton donor role is filled by H41. Residues T77 and 108 to 109 each bind coenzyme F420-(gamma-Glu)n; that span reads TG. E110 (proton acceptor) is an active-site residue. Coenzyme F420-(gamma-Glu)n-binding positions include N113, 178-179, and 181-182; these read GG and VV. Residues T196, K199, K260, and R284 each contribute to the substrate site.

It belongs to the F420-dependent glucose-6-phosphate dehydrogenase family. As to quaternary structure, homodimer.

It carries out the reaction oxidized coenzyme F420-(gamma-L-Glu)(n) + D-glucose 6-phosphate + H(+) = 6-phospho-D-glucono-1,5-lactone + reduced coenzyme F420-(gamma-L-Glu)(n). Functionally, catalyzes the coenzyme F420-dependent oxidation of glucose 6-phosphate (G6P) to 6-phosphogluconolactone. The protein is F420-dependent glucose-6-phosphate dehydrogenase 2 of Rhodococcus jostii (strain RHA1).